The sequence spans 146 residues: Globin (146 aa).

Alanine 1 is modified (N-acetylalanine). The Globin domain occupies 1 to 146; it reads ALTEPQKTAL…LLTMLIKAHS (146 aa). Histidine 65 and histidine 97 together coordinate heme b.

The protein belongs to the globin family. As to quaternary structure, homodimer.

The protein is Globin of Buccinum undatum (Common whelk).